Consider the following 327-residue polypeptide: Tetraacyldisaccharide 4'-kinase (327 aa).

56-63 provides a ligand contact to ATP; that stretch reads FVGGTGKT.

Belongs to the LpxK family.

The enzyme catalyses a lipid A disaccharide + ATP = a lipid IVA + ADP + H(+). Its pathway is glycolipid biosynthesis; lipid IV(A) biosynthesis; lipid IV(A) from (3R)-3-hydroxytetradecanoyl-[acyl-carrier-protein] and UDP-N-acetyl-alpha-D-glucosamine: step 6/6. Its function is as follows. Transfers the gamma-phosphate of ATP to the 4'-position of a tetraacyldisaccharide 1-phosphate intermediate (termed DS-1-P) to form tetraacyldisaccharide 1,4'-bis-phosphate (lipid IVA). This chain is Tetraacyldisaccharide 4'-kinase, found in Halorhodospira halophila (strain DSM 244 / SL1) (Ectothiorhodospira halophila (strain DSM 244 / SL1)).